We begin with the raw amino-acid sequence, 365 residues long: 3-dehydroquinate synthase (365 aa).

Residues 107 to 111 (GVIGD), 131 to 132 (TT), Lys144, and Lys153 contribute to the NAD(+) site. Zn(2+) is bound by residues Glu186, His251, and His268.

This sequence belongs to the sugar phosphate cyclases superfamily. Dehydroquinate synthase family. Requires Co(2+) as cofactor. Zn(2+) serves as cofactor. It depends on NAD(+) as a cofactor.

The protein localises to the cytoplasm. The catalysed reaction is 7-phospho-2-dehydro-3-deoxy-D-arabino-heptonate = 3-dehydroquinate + phosphate. The protein operates within metabolic intermediate biosynthesis; chorismate biosynthesis; chorismate from D-erythrose 4-phosphate and phosphoenolpyruvate: step 2/7. Its function is as follows. Catalyzes the conversion of 3-deoxy-D-arabino-heptulosonate 7-phosphate (DAHP) to dehydroquinate (DHQ). In Picosynechococcus sp. (strain ATCC 27264 / PCC 7002 / PR-6) (Agmenellum quadruplicatum), this protein is 3-dehydroquinate synthase.